Consider the following 321-residue polypeptide: Queuosine 5'-phosphate N-glycosylase/hydrolase (321 aa).

Residues phenylalanine 227, aspartate 229, and aspartate 296 each contribute to the queuine site. Catalysis depends on aspartate 229, which acts as the Nucleophile or transition state stabilizer.

This sequence belongs to the QNG1 protein family.

It catalyses the reaction queuosine 5'-phosphate + H2O = queuine + D-ribose 5-phosphate. Functionally, catalyzes the hydrolysis of queuosine 5'-phosphate, releasing the nucleobase queuine (q). Is required for salvage of queuine from exogenous queuosine (Q) that is imported and then converted to queuosine 5'-phosphate intracellularly. This Dictyostelium discoideum (Social amoeba) protein is Queuosine 5'-phosphate N-glycosylase/hydrolase.